The primary structure comprises 475 residues: MTTILTCPFKKLPTTSKWALRFAIRPLSCSSQLRAAPAVQTKTKKTLAKPNIRNVVVVDGVRTPFLLSGTSYKDLMPHDLARAALTGLLHRTSVPKEVVDYIIFGTVIQEVKTSNVAREAALGAGFSDKTPAHTVTMACISANQAMTTGVGLIASGQCDVIVAGGVELMSDIPIRHSRKMRKLMLDLNKAKSMGQRLSLISKFRLNFLAPELPAVAEFSTSETMGHSADRLAAAFAVSRLEQDEYALRSHSLAKKAQDEGLLSDVVPFRVPGKDTVTKDNGIRPSSLEQMAKLKPAFIKPYGTVTAANSSFLTDGASAMLIMAEEKALAMGYKPKAYLRDFMYVSQDPKDQLLLGPTYATPKVLEKAGLTMNDIDAFEFHEAFSGQILANFKAMDSDWFAENYMGRKTKVGLPPLEKFNNWGGSLSLGHPFGATGCRLVMAAANRLRKEGGQYGLVAACAAGGQGHAMIVEAYPK.

The transit peptide at 1–34 (MTTILTCPFKKLPTTSKWALRFAIRPLSCSSQLR) directs the protein to the mitochondrion. Lys-73 bears the N6-acetyllysine; alternate mark. N6-succinyllysine; alternate is present on Lys-73. The Acyl-thioester intermediate role is filled by Cys-139. The stretch at 174–221 (IRHSRKMRKLMLDLNKAKSMGQRLSLISKFRLNFLAPELPAVAEFSTS) is an intramembrane region. The residue at position 189 (Lys-189) is an N6-acetyllysine; alternate. Lys-189 is subject to N6-succinyllysine; alternate. N6-succinyllysine occurs at positions 191, 273, and 292. Lys-294 is modified (N6-acetyllysine; alternate). At Lys-294 the chain carries N6-succinyllysine; alternate. The residue at position 299 (Lys-299) is an N6-acetyllysine. Lys-333 bears the N6-acetyllysine; alternate mark. An N6-succinyllysine; alternate modification is found at Lys-333. Residues Lys-349 and Lys-362 each carry the N6-acetyllysine modification. The Proton donor/acceptor role is filled by Cys-459.

Belongs to the thiolase-like superfamily. Thiolase family. As to quaternary structure, heterotetramer of 2 alpha/HADHA and 2 beta/HADHB subunits; forms the mitochondrial trifunctional enzyme. Also purified as higher order heterooligomers including a 4 alpha/HADHA and 4 beta/HADHB heterooligomer which physiological significance remains unclear. The mitochondrial trifunctional enzyme interacts with MTLN. Interacts with RSAD2/viperin.

The protein localises to the mitochondrion. Its subcellular location is the mitochondrion inner membrane. It is found in the mitochondrion outer membrane. The protein resides in the endoplasmic reticulum. The catalysed reaction is an acyl-CoA + acetyl-CoA = a 3-oxoacyl-CoA + CoA. It catalyses the reaction butanoyl-CoA + acetyl-CoA = 3-oxohexanoyl-CoA + CoA. The enzyme catalyses hexanoyl-CoA + acetyl-CoA = 3-oxooctanoyl-CoA + CoA. It carries out the reaction octanoyl-CoA + acetyl-CoA = 3-oxodecanoyl-CoA + CoA. The catalysed reaction is decanoyl-CoA + acetyl-CoA = 3-oxododecanoyl-CoA + CoA. It catalyses the reaction dodecanoyl-CoA + acetyl-CoA = 3-oxotetradecanoyl-CoA + CoA. The enzyme catalyses tetradecanoyl-CoA + acetyl-CoA = 3-oxohexadecanoyl-CoA + CoA. Its pathway is lipid metabolism; fatty acid beta-oxidation. Its function is as follows. Mitochondrial trifunctional enzyme catalyzes the last three of the four reactions of the mitochondrial beta-oxidation pathway. The mitochondrial beta-oxidation pathway is the major energy-producing process in tissues and is performed through four consecutive reactions breaking down fatty acids into acetyl-CoA. Among the enzymes involved in this pathway, the trifunctional enzyme exhibits specificity for long-chain fatty acids. Mitochondrial trifunctional enzyme is a heterotetrameric complex composed of two proteins, the trifunctional enzyme subunit alpha/HADHA carries the 2,3-enoyl-CoA hydratase and the 3-hydroxyacyl-CoA dehydrogenase activities, while the trifunctional enzyme subunit beta/HADHB described here bears the 3-ketoacyl-CoA thiolase activity. The sequence is that of Trifunctional enzyme subunit beta, mitochondrial (HADHB) from Macaca fascicularis (Crab-eating macaque).